Here is a 634-residue protein sequence, read N- to C-terminus: tRNA uridine 5-carboxymethylaminomethyl modification enzyme MnmG (634 aa).

Glycine 14–glycine 19 lines the FAD pocket. Residue glycine 279 to phenylalanine 293 participates in NAD(+) binding.

Belongs to the MnmG family. As to quaternary structure, homodimer. Heterotetramer of two MnmE and two MnmG subunits. The cofactor is FAD.

It is found in the cytoplasm. Functionally, NAD-binding protein involved in the addition of a carboxymethylaminomethyl (cmnm) group at the wobble position (U34) of certain tRNAs, forming tRNA-cmnm(5)s(2)U34. In Xanthomonas oryzae pv. oryzae (strain KACC10331 / KXO85), this protein is tRNA uridine 5-carboxymethylaminomethyl modification enzyme MnmG.